The primary structure comprises 255 residues: tRNA pseudouridine synthase B (255 aa).

The Nucleophile role is filled by D52. Substrate is bound by residues Y80, Y183, and L204.

Belongs to the pseudouridine synthase TruB family. Type 1 subfamily.

The enzyme catalyses uridine(55) in tRNA = pseudouridine(55) in tRNA. Its function is as follows. Responsible for synthesis of pseudouridine from uracil-55 in the psi GC loop of transfer RNAs. The polypeptide is tRNA pseudouridine synthase B (Blochmanniella floridana).